The sequence spans 52 residues: MSSTANAIADAFLGVLNALAPIIEGATEIITFMALTYVMTMVIARILGGLFV.

2 helical membrane-spanning segments follow: residues alanine 11–threonine 31 and phenylalanine 32–valine 52.

The protein resides in the host membrane. The sequence is that of Transmembrane protein ORF52 from Acidianus filamentous virus 1 (isolate United States/Yellowstone) (AFV-1).